Consider the following 577-residue polypeptide: Arginine--tRNA ligase (577 aa).

Positions 122-132 (PNVAKEMHVGH) match the 'HIGH' region motif.

This sequence belongs to the class-I aminoacyl-tRNA synthetase family. In terms of assembly, monomer.

Its subcellular location is the cytoplasm. It carries out the reaction tRNA(Arg) + L-arginine + ATP = L-arginyl-tRNA(Arg) + AMP + diphosphate. This Histophilus somni (strain 2336) (Haemophilus somnus) protein is Arginine--tRNA ligase.